The following is a 319-amino-acid chain: NH(3)-dependent NAD(+) synthetase (319 aa).

Position 33-40 (33-40 (GLSGGIDS)) interacts with ATP. A Mg(2+)-binding site is contributed by Asp-39. Arg-169 serves as a coordination point for deamido-NAD(+). Thr-189 is a binding site for ATP. Glu-194 is a Mg(2+) binding site. The deamido-NAD(+) site is built by Lys-202 and Asp-209. 2 residues coordinate ATP: Lys-218 and Thr-240.

This sequence belongs to the NAD synthetase family. Homodimer.

It catalyses the reaction deamido-NAD(+) + NH4(+) + ATP = AMP + diphosphate + NAD(+) + H(+). It functions in the pathway cofactor biosynthesis; NAD(+) biosynthesis; NAD(+) from deamido-NAD(+) (ammonia route): step 1/1. In terms of biological role, catalyzes the ATP-dependent amidation of deamido-NAD to form NAD. Uses ammonia as a nitrogen source. This chain is NH(3)-dependent NAD(+) synthetase, found in Mesorhizobium japonicum (strain LMG 29417 / CECT 9101 / MAFF 303099) (Mesorhizobium loti (strain MAFF 303099)).